The sequence spans 910 residues: MASSAQSGGSSGGPAVPTVQRGIIKMVLSGCAIIVRGQPRGGPPPERQINLSNIRAGNLARRAAATQPDAKDTPDEPWAFPAREFLRKKLIGKEVCFTIENKTPQGREYGMIYLGKDTNGENIAESLVAEGLATRREGMRANNPEQNRLSECEEQAKAAKKGMWSEGNGSHTIRDLKYTIENPRHFVDSHHQKPVNAIIEHVRDGSVVRALLLPDYYLVTVMLSGIKCPTFRREADGSETPEPFAAEAKFFTESRLLQRDVQIILESCHNQNILGTILHPNGNITELLLKEGFARCVDWSIAVYTRGAEKLRAAERFAKERRLRIWRDYVAPTANLDQKDKQFVAKVMQVLNADAIVVKLNSGDYKTIHLSSIRPPRLEGENTQDKNKKLRPLYDIPYMFEAREFLRKKLIGKKVNVTVDYIRPASPATETVPAFSERTCATVTIGGINIAEALVSKGLATVIRYRQDDDQRSSHYDELLAAEARAIKNGKGLHSKKEVPIHRVADISGDTQKAKQFLPFLQRAGRSEAVVEYVFSGSRLKLYLPKETCLITFLLAGIECPRGARNLPGLVQEGEPFSEEATLFTKELVLQREVEVEVESMDKAGNFIGWLHIDGANLSVLLVEHALSKVHFTAERSSYYKSLLSAEEAAKQKKEKVWAHYEEQPVEEVMPVLEEKERSASYKPVFVTEITDDLHFYVQDVETGTQLEKLMENMRNDIASHPPVEGSYAPRRGEFCIAKFVDGEWYRARVEKVESPAKIHVFYIDYGNREVLPSTRLGTLSPAFSTRVLPAQATEYAFAFIQVPQDDDARTDAVDSVVRDIQNTQCLLNVEHLSAGCPHVTLQFADSKGDVGLGLVKEGLVMVEVRKEKQFQKVITEYLNAQESAKSARLNLWRYGDFRADDADEFGYSR.

Ala2 carries the post-translational modification N-acetylalanine. 3 TNase-like domains span residues 18-166 (TVQR…MWSE), 193-328 (KPVN…IWRD), and 341-496 (KQFV…LHSK). A Phosphothreonine modification is found at Thr103. Position 193 is an N6-acetyllysine (Lys193). At Thr240 the chain carries Phosphothreonine. 2 short sequence motifs (nuclear localization signal) span residues 321–325 (RRLRI) and 388–392 (KKLRP). The residue at position 426 (Ser426) is a Phosphoserine. Lys513 is covalently cross-linked (Glycyl lysine isopeptide (Lys-Gly) (interchain with G-Cter in SUMO2)). The TNase-like 4 domain maps to 525–660 (GRSEAVVEYV…KQKKEKVWAH (136 aa)). Residue Lys641 is modified to N6-acetyllysine. The residue at position 645 (Ser645) is a Phosphoserine. The region spanning 729–787 (APRRGEFCIAKFVDGEWYRARVEKVESPAKIHVFYIDYGNREVLPSTRLGTLSPAFSTR) is the Tudor domain. Residue Thr779 is modified to Phosphothreonine. Ser781, Ser785, and Ser909 each carry phosphoserine.

In terms of assembly, forms a ternary complex with STAT6 and POLR2A. Associates with the RNA-induced silencing complex (RISC). Interacts with the RISC components AGO2, FMR1 and TNRC6A. Interacts with GTF2E1 and GTF2E2. Interacts with PIM1. Interacts with STAT5. Interacts with SYT11 (via C2 2 domain); the interaction with SYT11 is direct. (Microbial infection) Interacts with EAV NSP1. Binds to acidic transactivation domain of EBNA2. Interacts with SARS-CoV-2 NSP9. Post-translationally, phosphorylated by PIM1 in vitro. In terms of tissue distribution, ubiquitously expressed.

The protein resides in the cytoplasm. Its subcellular location is the nucleus. It localises to the melanosome. It carries out the reaction Endonucleolytic cleavage to nucleoside 3'-phosphates and 3'-phosphooligonucleotide end-products.. In terms of biological role, endonuclease that mediates miRNA decay of both protein-free and AGO2-loaded miRNAs. As part of its function in miRNA decay, regulates mRNAs involved in G1-to-S phase transition. Functions as a bridging factor between STAT6 and the basal transcription factor. Plays a role in PIM1 regulation of MYB activity. Functions as a transcriptional coactivator for STAT5. Functionally, (Microbial infection) Functions as a transcriptional coactivator for the Epstein-Barr virus nuclear antigen 2 (EBNA2). (Microbial infection) Promotes SARS-CoV-2 RNA synthesis by binding to negative-sense RNA and the viral protein nsp9. In Homo sapiens (Human), this protein is Staphylococcal nuclease domain-containing protein 1 (SND1).